A 97-amino-acid chain; its full sequence is Putative membrane protein insertion efficiency factor (97 aa).

The disordered stretch occupies residues 77–97 (VPDAPASPSPSSSCSCKGPHP). Low complexity predominate over residues 85 to 97 (SPSSSCSCKGPHP).

The protein belongs to the UPF0161 family.

It localises to the cell inner membrane. Could be involved in insertion of integral membrane proteins into the membrane. This chain is Putative membrane protein insertion efficiency factor, found in Xanthomonas euvesicatoria pv. vesicatoria (strain 85-10) (Xanthomonas campestris pv. vesicatoria).